A 230-amino-acid polypeptide reads, in one-letter code: Cyclin-dependent kinase inhibitor rum1 (230 aa).

Disordered stretches follow at residues 1–25 (MEPS…SFKG), 43–118 (PESD…DGLY), and 188–230 (SRVP…NLLR). T13 is modified (phosphothreonine; by MAPK). S19 is modified (phosphoserine; by MAPK). Residues T58 and T62 each carry the phosphothreonine; by cdc2 modification. The segment at 67–147 (LLPNLMLQDR…TFKPKLLFAD (81 aa)) is CDK inhibitory and cyclin-binding. Positions 78-91 (NSLERCMEEDREHN) are enriched in basic and acidic residues. Positions 93–102 (FLSSSDNQLL) are enriched in polar residues. Residues 101 to 230 (LLSRKKRKPT…KDENRHNLLR (130 aa)) form a required for activity as a cdc2 kinase inhibitor region. A compositionally biased stretch (low complexity) spans 188–199 (SRVPSSSSGSFV). The segment covering 219-230 (NTKDENRHNLLR) has biased composition (basic and acidic residues).

Interacts with cdc13, cig2 and pop1. In terms of processing, phosphorylated by cig1-associated cdc2 which leads to increased stability. Phosphorylation by MAPK reduces cdc2 kinase inhibitor ability.

The protein resides in the nucleus. Regulator of cell cycle G1 phase progression. Ensures the correct sequence of S phase and mitosis in the cell by acting as an inhibitor of the cdc2 mitotic kinase. Probably interacts with cdc2 to inhibit its action until the cell mass for Start is reached. Determines the length of the pre-Start G1 period and prevents mitosis from happening in early G1 cells. Required for maintaining pheromone-induced G1 arrest. Acts as an adapter protein since interaction with cdc13 promotes cyclin proteolysis during G1. Becomes a target for degradation at the G1/S phase transition, following phosphorylation by cig1-associated cdc2 at the G1/S phase transition. This is Cyclin-dependent kinase inhibitor rum1 (rum1) from Schizosaccharomyces pombe (strain 972 / ATCC 24843) (Fission yeast).